The following is a 535-amino-acid chain: T-complex protein 1 subunit beta (535 aa).

Residue A2 is modified to N-acetylalanine. At S3 the chain carries Phosphoserine. K13 is modified (N6-acetyllysine). G44 is an ADP binding site. Position 44 (G44) interacts with ATP. The residue at position 60 (S60) is a Phosphoserine. D97 is a Mg(2+) binding site. 4 residues coordinate ADP: G98, T99, T100, and S101. Positions 98, 99, and 100 each coordinate ATP. Position 154 is an N6-acetyllysine (K154). Residues S168 and S169 each contribute to the ADP site. Position 181 is an N6-acetyllysine (K181). K248 is covalently cross-linked (Glycyl lysine isopeptide (Lys-Gly) (interchain with G-Cter in SUMO2)). Phosphoserine is present on S260. Position 261 is a phosphothreonine (T261). ADP-binding residues include G410, E495, and K500. 2 residues coordinate ATP: E495 and K500.

The protein belongs to the TCP-1 chaperonin family. As to quaternary structure, component of the chaperonin-containing T-complex (TRiC), a hexadecamer composed of two identical back-to-back stacked rings enclosing a protein folding chamber. Each ring is made up of eight different subunits: TCP1/CCT1, CCT2, CCT3, CCT4, CCT5, CCT6A/CCT6, CCT7, CCT8. Interacts with PACRG. Interacts with FLCN. Interacts with DLEC1. Interacts with SVEP1.

The protein resides in the cytoplasm. The enzyme catalyses ATP + H2O = ADP + phosphate + H(+). Component of the chaperonin-containing T-complex (TRiC), a molecular chaperone complex that assists the folding of actin, tubulin and other proteins upon ATP hydrolysis. The TRiC complex mediates the folding of WRAP53/TCAB1, thereby regulating telomere maintenance. As part of the TRiC complex may play a role in the assembly of BBSome, a complex involved in ciliogenesis regulating transports vesicles to the cilia. This Bos taurus (Bovine) protein is T-complex protein 1 subunit beta (CCT2).